The following is a 241-amino-acid chain: MYQFQQDNQYFIFNFDRTFDQATEFFQAEFWQKQERVIGSAKGRGTTYFLQTEDWFGVNCALRHYYRGGLWGKLNKDRYRFSDLETTRSFAEFHLLQRLYEAGFPVPKPIAARIQKGKLGICYQADILTEKIENAQDLTALLQTQTLPKETWTQIGRLIRKLHDLQICHTDLNAHNILLQQIEQEQKCWLLDFDKCGEKSGDFWKVQNLNRLKRSFEKEIRRMNIQFTEQNWADLTAAYHQ.

The active site involves Asp171.

The protein belongs to the protein kinase superfamily. KdkA/RfaP family.

It is found in the cell inner membrane. It catalyses the reaction an alpha-Kdo-(2-&gt;6)-lipid IVA + ATP = a 4-O-phospho-alpha-Kdo-(2-&gt;6)-lipid IVA + ADP + H(+). The protein operates within bacterial outer membrane biogenesis; LPS core biosynthesis. Functionally, catalyzes the ATP-dependent phosphorylation of the 3-deoxy-D-manno-octulosonic acid (Kdo) residue in Kdo-lipid IV(A) at the 4-OH position. This is 3-deoxy-D-manno-octulosonic acid kinase from Haemophilus influenzae (strain PittGG).